The primary structure comprises 365 residues: Peptide chain release factor 2 (365 aa).

Gln249 carries the N5-methylglutamine modification.

Belongs to the prokaryotic/mitochondrial release factor family. Post-translationally, methylated by PrmC. Methylation increases the termination efficiency of RF2.

The protein localises to the cytoplasm. Its function is as follows. Peptide chain release factor 2 directs the termination of translation in response to the peptide chain termination codons UGA and UAA. This is Peptide chain release factor 2 from Acholeplasma laidlawii (strain PG-8A).